A 263-amino-acid chain; its full sequence is Calpain small subunit 1 (263 aa).

Residue M1 is modified to N-acetylmethionine. The residue at position 6 (S6) is a Phosphoserine. Positions 91–125 (EEVRQFRRLFAQLAGDDMEVSATELMNILNKVVTR) constitute an EF-hand 1; atypical domain. Residues A104, D107, E109, E114, D132, D147, D149, T151, K153, and E158 each contribute to the Ca(2+) site. 4 EF-hand domains span residues 134–167 (FGID…NNIK), 164–199 (NNIK…AGFR), 200–228 (LNEH…ISCL), and 229–263 (VRLD…TMYS). K174 is subject to N6-acetyllysine. Residues D177, D179, S181, T183, E188, and D220 each coordinate Ca(2+).

As to quaternary structure, homodimer or heterodimer of a large (catalytic) and a small (regulatory) subunit. In presence of calcium, the heterodimer dissociates.

The protein localises to the cytoplasm. Its subcellular location is the cell membrane. Regulatory subunit of the calcium-regulated non-lysosomal thiol-protease which catalyzes limited proteolysis of substrates involved in cytoskeletal remodeling and signal transduction. Essential for embryonic development. The polypeptide is Calpain small subunit 1 (CAPNS1) (Bos taurus (Bovine)).